We begin with the raw amino-acid sequence, 357 residues long: Guanine nucleotide-binding protein G(o) subunit alpha (357 aa).

Residue G2 is the site of N-myristoyl glycine attachment. C3 is lipidated: S-palmitoyl cysteine. The 326-residue stretch at 32 to 357 folds into the G-alpha domain; it reads KDIKLLLLGA…ANNLRGCGLY (326 aa). The tract at residues 35–48 is G1 motif; it reads KLLLLGAGESGKST. GTP is bound by residues 40 to 47, 179 to 185, 204 to 208, 273 to 276, and A329; these read GAGESGKS, LRTRVKT, DVGGQ, and NKKD. 2 residues coordinate Mg(2+): S47 and T185. The G2 motif stretch occupies residues 177–185; the sequence is DILRTRVKT. The tract at residues 200–209 is G3 motif; sequence FKLFDVGGQR. Residues 269 to 276 are G4 motif; it reads ILFLNKKD. Residues 327–332 form a G5 motif region; that stretch reads TCATDT.

Belongs to the G-alpha family. G(i/o/t/z) subfamily. In terms of assembly, g proteins are composed of 3 units; alpha, beta and gamma. The alpha chain contains the guanine nucleotide binding site.

Guanine nucleotide-binding proteins (G proteins) are involved as modulators or transducers in various transmembrane signaling systems. The G(o) protein function is not clear. This chain is Guanine nucleotide-binding protein G(o) subunit alpha (SCGOA), found in Mizuhopecten yessoensis (Japanese scallop).